The following is a 125-amino-acid chain: Large-conductance mechanosensitive channel (125 aa).

2 helical membrane-spanning segments follow: residues 15–35 (MDLA…NSLV) and 67–87 (GSFL…FFLI).

The protein belongs to the MscL family. As to quaternary structure, homopentamer.

It localises to the cell membrane. Channel that opens in response to stretch forces in the membrane lipid bilayer. May participate in the regulation of osmotic pressure changes within the cell. In Lactobacillus gasseri (strain ATCC 33323 / DSM 20243 / BCRC 14619 / CIP 102991 / JCM 1131 / KCTC 3163 / NCIMB 11718 / NCTC 13722 / AM63), this protein is Large-conductance mechanosensitive channel.